The following is a 64-amino-acid chain: Alpha-conotoxin CnIA (64 aa).

An N-terminal signal peptide occupies residues 1–21; it reads MGMRMMFTVFLLVVLTTTVVS. Residues 22-47 constitute a propeptide that is removed on maturation; sequence FPSDSASDGRDDEAKDERSDIYESKR. 2 disulfide bridges follow: Cys-51–Cys-56 and Cys-52–Cys-62. Pro-54 carries the 4-hydroxyproline; in CnIK; partial modification. Cys-62 carries the cysteine amide modification.

The protein belongs to the conotoxin A superfamily. As to expression, expressed by the venom duct.

It is found in the secreted. Alpha-conotoxins act on postsynaptic membranes, they bind to the nicotinic acetylcholine receptors (nAChR) and thus inhibit them. CnIA and CnIB block muscular nAChR alpha-1/gamma and alpha-1/delta subunits. The sequence is that of Alpha-conotoxin CnIA from Conus consors (Singed cone).